The primary structure comprises 480 residues: Ciliated left-right organizer protein containing ZP-N domains homolog (480 aa).

The first 23 residues, Met1–Ser23, serve as a signal peptide directing secretion.

As to expression, expressed specifically by cells of the ciliated left-right organizer.

The protein resides in the secreted. The sequence is that of Ciliated left-right organizer protein containing ZP-N domains homolog from Xenopus tropicalis (Western clawed frog).